The following is a 308-amino-acid chain: uncharacterized protein (308 aa).

The S4 RNA-binding domain maps to 15-81; it reads MRVDTGLARL…QNTPIDIEGM (67 aa). Asp139 is a catalytic residue.

Belongs to the pseudouridine synthase RluA family.

The catalysed reaction is a uridine in RNA = a pseudouridine in RNA. This is an uncharacterized protein from Mycobacterium tuberculosis (strain CDC 1551 / Oshkosh).